Here is a 316-residue protein sequence, read N- to C-terminus: Leucine-rich repeat-containing protein 73 (316 aa).

LRR repeat units follow at residues 57 to 78, 86 to 106, 114 to 137, 145 to 166, 174 to 187, 202 to 223, and 231 to 250; these read SLAQ…KQLA, SIQS…ALLN, ALVA…CGLL, GLKE…SRLA, QVRV…PLGD, TLEV…TLLD, and ALRS…QQQI. Positions 257-296 are disordered; the sequence is GEEEEEVAGGAGDTQEWERGREPAAHQRGSSSWMCPSDPS. Over residues 272-281 the composition is skewed to basic and acidic residues; the sequence is EWERGREPAA. Residues 286-296 are compositionally biased toward low complexity; it reads SSSWMCPSDPS.

The polypeptide is Leucine-rich repeat-containing protein 73 (LRRC73) (Homo sapiens (Human)).